Here is a 347-residue protein sequence, read N- to C-terminus: S-adenosylmethionine:tRNA ribosyltransferase-isomerase (347 aa).

The protein belongs to the QueA family. Monomer.

It localises to the cytoplasm. It carries out the reaction 7-aminomethyl-7-carbaguanosine(34) in tRNA + S-adenosyl-L-methionine = epoxyqueuosine(34) in tRNA + adenine + L-methionine + 2 H(+). Its pathway is tRNA modification; tRNA-queuosine biosynthesis. Transfers and isomerizes the ribose moiety from AdoMet to the 7-aminomethyl group of 7-deazaguanine (preQ1-tRNA) to give epoxyqueuosine (oQ-tRNA). This Xylella fastidiosa (strain M23) protein is S-adenosylmethionine:tRNA ribosyltransferase-isomerase.